We begin with the raw amino-acid sequence, 150 residues long: UPF0506 protein SJCHGC03144 (150 aa).

An N-terminal signal peptide occupies residues 1–18 (MNTCIQLLILCLVTVINS). N-linked (GlcNAc...) asparagine glycosylation is found at N20, N36, N52, and N110. 3 cysteine pairs are disulfide-bonded: C116–C130, C123–C134, and C129–C139.

The protein belongs to the UPF0506 family.

The protein resides in the secreted. This Schistosoma japonicum (Blood fluke) protein is UPF0506 protein SJCHGC03144.